Reading from the N-terminus, the 257-residue chain is 1-(5-phosphoribosyl)-5-[(5-phosphoribosylamino)methylideneamino] imidazole-4-carboxamide isomerase (257 aa).

Aspartate 8 serves as the catalytic Proton acceptor. Aspartate 130 serves as the catalytic Proton donor.

Belongs to the HisA/HisF family.

Its subcellular location is the cytoplasm. The catalysed reaction is 1-(5-phospho-beta-D-ribosyl)-5-[(5-phospho-beta-D-ribosylamino)methylideneamino]imidazole-4-carboxamide = 5-[(5-phospho-1-deoxy-D-ribulos-1-ylimino)methylamino]-1-(5-phospho-beta-D-ribosyl)imidazole-4-carboxamide. The protein operates within amino-acid biosynthesis; L-histidine biosynthesis; L-histidine from 5-phospho-alpha-D-ribose 1-diphosphate: step 4/9. The polypeptide is 1-(5-phosphoribosyl)-5-[(5-phosphoribosylamino)methylideneamino] imidazole-4-carboxamide isomerase (Chlorobium chlorochromatii (strain CaD3)).